Consider the following 771-residue polypeptide: 5-methyltetrahydropteroyltriglutamate--homocysteine methyltransferase (771 aa).

5-methyltetrahydropteroyltri-L-glutamate-binding positions include 16–19 and lysine 117; that span reads RELK. L-homocysteine contacts are provided by residues 443 to 445 and glutamate 496; that span reads IGS. L-methionine contacts are provided by residues 443 to 445 and glutamate 496; that span reads IGS. Residues 527–528 and tryptophan 573 contribute to the 5-methyltetrahydropteroyltri-L-glutamate site; that span reads RC. Aspartate 611 lines the L-homocysteine pocket. Position 611 (aspartate 611) interacts with L-methionine. Glutamate 617 is a binding site for 5-methyltetrahydropteroyltri-L-glutamate. Positions 653, 655, and 677 each coordinate Zn(2+). Histidine 706 acts as the Proton donor in catalysis. Zn(2+) is bound at residue cysteine 738.

This sequence belongs to the vitamin-B12 independent methionine synthase family. The cofactor is Zn(2+).

It catalyses the reaction 5-methyltetrahydropteroyltri-L-glutamate + L-homocysteine = tetrahydropteroyltri-L-glutamate + L-methionine. It participates in amino-acid biosynthesis; L-methionine biosynthesis via de novo pathway; L-methionine from L-homocysteine (MetE route): step 1/1. Its function is as follows. Catalyzes the transfer of a methyl group from 5-methyltetrahydrofolate to homocysteine resulting in methionine formation. The protein is 5-methyltetrahydropteroyltriglutamate--homocysteine methyltransferase of Stutzerimonas stutzeri (strain A1501) (Pseudomonas stutzeri).